The sequence spans 356 residues: Tyrosine recombinase XerS (356 aa).

The region spanning 16–121 (IMPWYVLDYY…ALSSLYKYLT (106 aa)) is the Core-binding (CB) domain. Residues 169–354 (AFLDYVDKEY…VNDEQKNALD (186 aa)) form the Tyr recombinase domain. Catalysis depends on residues Arg-210, Lys-234, His-306, Arg-309, and His-332. Residue Tyr-341 is the O-(3'-phospho-DNA)-tyrosine intermediate of the active site.

Belongs to the 'phage' integrase family. XerS subfamily.

The protein localises to the cytoplasm. FtsK is required for recombination. Functionally, site-specific tyrosine recombinase, which acts by catalyzing the cutting and rejoining of the recombining DNA molecules. Essential to convert dimers of the bacterial chromosome into monomers to permit their segregation at cell division. The polypeptide is Tyrosine recombinase XerS (Streptococcus pyogenes serotype M5 (strain Manfredo)).